Consider the following 283-residue polypeptide: Tetraspanin-33 (283 aa).

The Cytoplasmic segment spans residues 1 to 24 (MARRPGAPAAYGEDFSFVSPLVKY). The chain crosses the membrane as a helical span at residues 25–45 (LLFFFNMLFWVISMVMVAVGV). Topologically, residues 46–64 (YARLMKHEEAALACLAVDP) are extracellular. Residues 65–85 (AILLIVVGILMFLLTFCGCIG) form a helical membrane-spanning segment. Residues 86 to 96 (SLRENICLLQT) are Cytoplasmic-facing. The helical transmembrane segment at 97–117 (FSLCLTVVFLLQLAAGVLGFV) threads the bilayer. Residues 118–235 (FSDKVRGKVS…DRLVNWIHSN (118 aa)) lie on the Extracellular side of the membrane. Cystine bridges form between cysteine 156/cysteine 224, cysteine 157/cysteine 189, cysteine 173/cysteine 183, and cysteine 190/cysteine 203. Asparagine 172 is a glycosylation site (N-linked (GlcNAc...) asparagine). Residues 236–256 (LFVLGGVALGLAIPQLVGIML) traverse the membrane as a helical segment. Topologically, residues 257 to 283 (SMILVSQIKDQIKLQLYNQQHRADPWY) are cytoplasmic.

Belongs to the tetraspanin (TM4SF) family. In terms of assembly, homodimer; disulfide-linked. Interacts (via extracellular domain) with ADAM10 (via extracellular domain). Interacts (via cytoplasmic domain) with PLEKHA7 (via WW domains); the interaction is dependent on PDZD11 being bound to PLEKHA7 and facilitates the docking of ADAM10 to zonula adherens.

It is found in the cell membrane. It localises to the cell junction. The protein resides in the adherens junction. Its subcellular location is the cytoplasm. Its function is as follows. Part of TspanC8 subgroup, composed of 6 members that interact with the transmembrane metalloprotease ADAM10. This interaction is required for ADAM10 exit from the endoplasmic reticulum and for enzymatic maturation and trafficking to the cell surface as well as substrate specificity. Different TspanC8/ADAM10 complexes have distinct substrates. Plays an important role in normal erythropoiesis. It has a role in the differentiation of erythroid progenitors. Negatively regulates ligand-induced Notch activity probably by regulating ADAM10 activity. Mediates docking of ADAM10 to zonula adherens by interacting with ADAM10 and, in a PDZD11-dependent manner, with the zonula adherens protein PLEKHA7. The sequence is that of Tetraspanin-33 (TSPAN33) from Bos taurus (Bovine).